Reading from the N-terminus, the 163-residue chain is Nucleotide-binding protein HS_0688 (163 aa).

Belongs to the YajQ family.

Its function is as follows. Nucleotide-binding protein. This chain is Nucleotide-binding protein HS_0688, found in Histophilus somni (strain 129Pt) (Haemophilus somnus).